Consider the following 829-residue polypeptide: Leucine--tRNA ligase (829 aa).

A 'HIGH' region motif is present at residues 34–44 (PYPSGNIHMGH). A 'KMSKS' region motif is present at residues 591 to 595 (KMSKS). Lys594 lines the ATP pocket.

This sequence belongs to the class-I aminoacyl-tRNA synthetase family.

It localises to the cytoplasm. It catalyses the reaction tRNA(Leu) + L-leucine + ATP = L-leucyl-tRNA(Leu) + AMP + diphosphate. This is Leucine--tRNA ligase from Ehrlichia canis (strain Jake).